Here is a 316-residue protein sequence, read N- to C-terminus: Small ribosomal subunit biogenesis GTPase RsgA (316 aa).

The 166-residue stretch at 83–248 folds into the CP-type G domain; it reads DQYKSKLFAA…LIDSPGFQEF (166 aa). Residues 131–134 and 185–193 each bind GTP; these read NKTD and GQSGMGKST. Cysteine 272, cysteine 277, histidine 279, and cysteine 285 together coordinate Zn(2+).

This sequence belongs to the TRAFAC class YlqF/YawG GTPase family. RsgA subfamily. In terms of assembly, monomer. Associates with 30S ribosomal subunit, binds 16S rRNA. The cofactor is Zn(2+).

It localises to the cytoplasm. In terms of biological role, one of several proteins that assist in the late maturation steps of the functional core of the 30S ribosomal subunit. Helps release RbfA from mature subunits. May play a role in the assembly of ribosomal proteins into the subunit. Circularly permuted GTPase that catalyzes slow GTP hydrolysis, GTPase activity is stimulated by the 30S ribosomal subunit. The protein is Small ribosomal subunit biogenesis GTPase RsgA of Paraburkholderia xenovorans (strain LB400).